Reading from the N-terminus, the 587-residue chain is Aspartate--tRNA ligase (587 aa).

Glutamate 174 contacts L-aspartate. The segment at 198–201 (QITK) is aspartate. Arginine 220 is an L-aspartate binding site. Residues 220 to 222 (RDE) and glutamine 229 each bind ATP. Histidine 443 contacts L-aspartate. Glutamate 477 contacts ATP. Arginine 484 lines the L-aspartate pocket. 529 to 532 (GLDR) is a binding site for ATP.

This sequence belongs to the class-II aminoacyl-tRNA synthetase family. Type 1 subfamily. As to quaternary structure, homodimer.

The protein resides in the cytoplasm. The enzyme catalyses tRNA(Asp) + L-aspartate + ATP = L-aspartyl-tRNA(Asp) + AMP + diphosphate. Functionally, catalyzes the attachment of L-aspartate to tRNA(Asp) in a two-step reaction: L-aspartate is first activated by ATP to form Asp-AMP and then transferred to the acceptor end of tRNA(Asp). The polypeptide is Aspartate--tRNA ligase (Streptococcus pneumoniae serotype 19F (strain G54)).